The following is a 247-amino-acid chain: 1-(5-phosphoribosyl)-5-[(5-phosphoribosylamino)methylideneamino] imidazole-4-carboxamide isomerase (247 aa).

Asp8 functions as the Proton acceptor in the catalytic mechanism. The Proton donor role is filled by Asp130.

It belongs to the HisA/HisF family.

The protein localises to the cytoplasm. The catalysed reaction is 1-(5-phospho-beta-D-ribosyl)-5-[(5-phospho-beta-D-ribosylamino)methylideneamino]imidazole-4-carboxamide = 5-[(5-phospho-1-deoxy-D-ribulos-1-ylimino)methylamino]-1-(5-phospho-beta-D-ribosyl)imidazole-4-carboxamide. It participates in amino-acid biosynthesis; L-histidine biosynthesis; L-histidine from 5-phospho-alpha-D-ribose 1-diphosphate: step 4/9. This is 1-(5-phosphoribosyl)-5-[(5-phosphoribosylamino)methylideneamino] imidazole-4-carboxamide isomerase from Stutzerimonas stutzeri (strain A1501) (Pseudomonas stutzeri).